Consider the following 510-residue polypeptide: Xylose import ATP-binding protein XylG (510 aa).

ABC transporter domains lie at 5 to 242 (LEMK…VGRE) and 259 to 505 (LRVE…LRSE). 37-44 (GENGSGKS) provides a ligand contact to ATP.

Belongs to the ABC transporter superfamily. Xylose importer (TC 3.A.1.2.4) family. The complex is composed of two ATP-binding proteins (XylG), two transmembrane proteins (XylH) and a solute-binding protein (XylF).

It is found in the cell inner membrane. It carries out the reaction D-xylose(out) + ATP + H2O = D-xylose(in) + ADP + phosphate + H(+). Functionally, part of the ABC transporter complex XylFGH involved in xylose import. Responsible for energy coupling to the transport system. This Yersinia pestis protein is Xylose import ATP-binding protein XylG.